The following is a 564-amino-acid chain: MHSYDYLLLLAFFAIVLLPAPWLGRFYYKVMEGQRTWLSPILGPVERGCYRLSGVNADQEQNWKQYTLALLAFNLAGFLLLFAVLLLQGSLPLNPQHLPGQEWSLAFNTAVSFMTNTNWQSYSGEASVSYLTQMIGLTVQNFVSAATGLAVLVALSRGIARRSAGTLGNFWVDLTRATLYGLLPLCLVLALLLVWQGVPQTFADYVHAVTLQGTDQTIPLGPAASQIAIKQLGTNGGGFFGVNSAHPFENPTAWSNLFEVASIILIPVALVFTFGHYVKDLRQSRAIIACMLALFLIGGSTALWSEHQPNPALESAQVRQSAPLEGKESRFGTTGSVLWTVTTTSASNGSVNAMHDSLNPLTGMVAMVNMMLGEVIFGGVGAGLYGMLLFVLIAVFLAGLMIGRTPEYLGKKLQAREVQLLVATLLVMPVGVLILGAIAASLPGPAGAVSNPGAHGFSQLLYAYTSGTANNGSAFAGFGANTTFHNVMIGLAMLIGRFGYILPVLALAGSLAAKKSAPQGLNSFPTHGPLFTTLLLLTILLVGGLTFLPTLALGPIAEHLSLGF.

A run of 10 helical transmembrane segments spans residues 4–24 (YDYLLLLAFFAIVLLPAPWLG), 67–87 (TLALLAFNLAGFLLLFAVLLL), 135–155 (IGLTVQNFVSAATGLAVLVAL), 179–199 (LYGLLPLCLVLALLLVWQGVP), 258–278 (FEVASIILIPVALVFTFGHYV), 286–306 (AIIACMLALFLIGGSTALWSE), 382–402 (AGLYGMLLFVLIAVFLAGLMI), 420–440 (LLVATLLVMPVGVLILGAIAA), 487–507 (VMIGLAMLIGRFGYILPVLAL), and 534–554 (LLLLTILLVGGLTFLPTLALG).

The protein belongs to the KdpA family. The system is composed of three essential subunits: KdpA, KdpB and KdpC.

It is found in the cell inner membrane. In terms of biological role, part of the high-affinity ATP-driven potassium transport (or Kdp) system, which catalyzes the hydrolysis of ATP coupled with the electrogenic transport of potassium into the cytoplasm. This subunit binds the periplasmic potassium ions and delivers the ions to the membrane domain of KdpB through an intramembrane tunnel. In Pseudomonas entomophila (strain L48), this protein is Potassium-transporting ATPase potassium-binding subunit.